We begin with the raw amino-acid sequence, 210 residues long: 7-carboxy-7-deazaguanine synthase (210 aa).

Substrate contacts are provided by residues 12–14 (LQG) and Arg-27. In terms of domain architecture, Radical SAM core spans 18–210 (QAGRAAVFCR…LQTHKYIGIP (193 aa)). [4Fe-4S] cluster is bound by residues Cys-31, Cys-46, and Cys-49. Thr-51 serves as a coordination point for Mg(2+). Thr-90 contributes to the substrate binding site. S-adenosyl-L-methionine contacts are provided by residues Gly-92, 133-135 (SPK), and 173-176 (QPMD). Position 210 (Pro-210) interacts with substrate.

The protein belongs to the radical SAM superfamily. 7-carboxy-7-deazaguanine synthase family. Homodimer. Requires [4Fe-4S] cluster as cofactor. The cofactor is S-adenosyl-L-methionine. It depends on Mg(2+) as a cofactor.

The catalysed reaction is 6-carboxy-5,6,7,8-tetrahydropterin + H(+) = 7-carboxy-7-deazaguanine + NH4(+). It participates in purine metabolism; 7-cyano-7-deazaguanine biosynthesis. Its function is as follows. Catalyzes the complex heterocyclic radical-mediated conversion of 6-carboxy-5,6,7,8-tetrahydropterin (CPH4) to 7-carboxy-7-deazaguanine (CDG), a step common to the biosynthetic pathways of all 7-deazapurine-containing compounds. The chain is 7-carboxy-7-deazaguanine synthase from Bordetella pertussis (strain Tohama I / ATCC BAA-589 / NCTC 13251).